The primary structure comprises 262 residues: Glucosamine-6-phosphate deaminase (262 aa).

Asp-63 acts as the Proton acceptor; for enolization step in catalysis. Asn-129 (for ring-opening step) is an active-site residue. Catalysis depends on His-131, which acts as the Proton acceptor; for ring-opening step. The For ring-opening step role is filled by Glu-136.

Belongs to the glucosamine/galactosamine-6-phosphate isomerase family. NagB subfamily.

It carries out the reaction alpha-D-glucosamine 6-phosphate + H2O = beta-D-fructose 6-phosphate + NH4(+). Its pathway is amino-sugar metabolism; N-acetylneuraminate degradation; D-fructose 6-phosphate from N-acetylneuraminate: step 5/5. Functionally, catalyzes the reversible isomerization-deamination of glucosamine 6-phosphate (GlcN6P) to form fructose 6-phosphate (Fru6P) and ammonium ion. This Bacillus cereus (strain ZK / E33L) protein is Glucosamine-6-phosphate deaminase.